Reading from the N-terminus, the 286-residue chain is MVAKILDGKQIAKDYRQGLQDQVEALKEKGFTPKLSVILVGNDGASQSYVRSKKKAAEKIGMISEIVHLEETATEEEVLNELNRLNNDDSVSGILVQVPLPKQVSEQKILEAINPEKDVDGFHPINIGKLYIDEQTFVPCTPLGIMEILKHADIDLEGKNAVVIGRSHIVGQPVSKLLLQKNASVTILHSRSKDMASYLKDADVIVSAVGKPGLVTKDVVKEGAVIIDVGNTPDENGKLKGDVDYDAVKEIAGAITPVPGGVGPLTITMVLNNTLLAEKMRRGIDS.

Residues 165–167 (GRS) and Ser190 each bind NADP(+).

This sequence belongs to the tetrahydrofolate dehydrogenase/cyclohydrolase family. As to quaternary structure, homodimer.

The enzyme catalyses (6R)-5,10-methylene-5,6,7,8-tetrahydrofolate + NADP(+) = (6R)-5,10-methenyltetrahydrofolate + NADPH. The catalysed reaction is (6R)-5,10-methenyltetrahydrofolate + H2O = (6R)-10-formyltetrahydrofolate + H(+). It functions in the pathway one-carbon metabolism; tetrahydrofolate interconversion. Its function is as follows. Catalyzes the oxidation of 5,10-methylenetetrahydrofolate to 5,10-methenyltetrahydrofolate and then the hydrolysis of 5,10-methenyltetrahydrofolate to 10-formyltetrahydrofolate. The protein is Bifunctional protein FolD of Staphylococcus aureus (strain USA300).